Here is a 343-residue protein sequence, read N- to C-terminus: Isopentenyl-diphosphate delta-isomerase (343 aa).

A substrate-binding site is contributed by 9 to 10 (RK). Residues serine 66, 67–69 (SMT), serine 98, and asparagine 126 each bind FMN. 98 to 100 (SQR) is a substrate binding site. Residue glutamine 161 coordinates substrate. Residue glutamate 162 participates in Mg(2+) binding. Residues lysine 193, threonine 223, 273 to 275 (GIR), and 294 to 295 (AA) each bind FMN.

The protein belongs to the IPP isomerase type 2 family. Homooctamer. Dimer of tetramers. The cofactor is FMN. It depends on NADPH as a cofactor. Mg(2+) is required as a cofactor.

It localises to the cytoplasm. The enzyme catalyses isopentenyl diphosphate = dimethylallyl diphosphate. Its function is as follows. Involved in the biosynthesis of isoprenoids. Catalyzes the 1,3-allylic rearrangement of the homoallylic substrate isopentenyl (IPP) to its allylic isomer, dimethylallyl diphosphate (DMAPP). This Hydrogenovibrio crunogenus (strain DSM 25203 / XCL-2) (Thiomicrospira crunogena) protein is Isopentenyl-diphosphate delta-isomerase.